Reading from the N-terminus, the 223-residue chain is Small ribosomal subunit protein uS3 (223 aa).

The region spanning 39–107 (IRQFLRKKPS…EVWLEIAEIK (69 aa)) is the KH type-2 domain.

Belongs to the universal ribosomal protein uS3 family. As to quaternary structure, part of the 30S ribosomal subunit. Forms a tight complex with proteins S10 and S14.

In terms of biological role, binds the lower part of the 30S subunit head. Binds mRNA in the 70S ribosome, positioning it for translation. The sequence is that of Small ribosomal subunit protein uS3 from Chlamydia pneumoniae (Chlamydophila pneumoniae).